A 199-amino-acid polypeptide reads, in one-letter code: Pyridoxal 5'-phosphate synthase subunit PdxT (199 aa).

Residue 52–54 (GES) coordinates L-glutamine. The active-site Nucleophile is the Cys84. L-glutamine is bound by residues Arg115 and 143–144 (IR). Active-site charge relay system residues include His179 and Glu181.

This sequence belongs to the glutaminase PdxT/SNO family. As to quaternary structure, in the presence of PdxS, forms a dodecamer of heterodimers. Only shows activity in the heterodimer.

It catalyses the reaction aldehydo-D-ribose 5-phosphate + D-glyceraldehyde 3-phosphate + L-glutamine = pyridoxal 5'-phosphate + L-glutamate + phosphate + 3 H2O + H(+). The enzyme catalyses L-glutamine + H2O = L-glutamate + NH4(+). It participates in cofactor biosynthesis; pyridoxal 5'-phosphate biosynthesis. In terms of biological role, catalyzes the hydrolysis of glutamine to glutamate and ammonia as part of the biosynthesis of pyridoxal 5'-phosphate. The resulting ammonia molecule is channeled to the active site of PdxS. The protein is Pyridoxal 5'-phosphate synthase subunit PdxT of Methanosarcina acetivorans (strain ATCC 35395 / DSM 2834 / JCM 12185 / C2A).